A 419-amino-acid chain; its full sequence is MHKLIIHGGTPLKGIINISGAKNAVLPIMAASILTDKLHITNVPKLTDVSTMKDLLRSHGADIEIIEHQDEFELIIDTKNINNFTADYEIVRKMRASIWVLGPLLTKYGKAKVSLPGGCAIGARQVDLHIAVLKAMGAEIEIEDGYINASSKGRLKGTHFVFDKVSVGATINAILAAVLAEGETMLFNCGREPEIVDLCNCLITMGADIAGIGTSEITIKGKDSLNKASYKVLSDRIEAGTYMFAAAITKGDVKICRIDYHIVENIALKLIETGIKVVPINNGVQVTYEGKLNSVDLETNPYPGFATDLQAQFMSLMTLSSGVSMITENIFENRFMHVPELCRMGADIVVRGNKAVVRGVEMLKGAEVMASDLRASVSLILAGLSTNSKTVLHRIYHLDRGFQDLEKKLSNCGADIKRV.

22-23 (KN) provides a ligand contact to phosphoenolpyruvate. Residue R95 participates in UDP-N-acetyl-alpha-D-glucosamine binding. The active-site Proton donor is the C119. C119 is subject to 2-(S-cysteinyl)pyruvic acid O-phosphothioketal. UDP-N-acetyl-alpha-D-glucosamine is bound by residues 164 to 167 (KVSV), D308, and I330.

The protein belongs to the EPSP synthase family. MurA subfamily.

It is found in the cytoplasm. It carries out the reaction phosphoenolpyruvate + UDP-N-acetyl-alpha-D-glucosamine = UDP-N-acetyl-3-O-(1-carboxyvinyl)-alpha-D-glucosamine + phosphate. Its pathway is cell wall biogenesis; peptidoglycan biosynthesis. Functionally, cell wall formation. Adds enolpyruvyl to UDP-N-acetylglucosamine. The polypeptide is UDP-N-acetylglucosamine 1-carboxyvinyltransferase (Rickettsia conorii (strain ATCC VR-613 / Malish 7)).